Reading from the N-terminus, the 329-residue chain is VSG expression site-associated protein 221A (329 aa).

Positions 1–23 (MKVEIVELVVLLFSVTCVDAWLQ) are cleaved as a signal peptide. N-linked (GlcNAc...) asparagine glycans are attached at residues Asn-73, Asn-294, and Asn-308.

Not known but may be related to activation of the variant surface glycoprotein genes. This Trypanosoma brucei brucei protein is VSG expression site-associated protein 221A.